A 257-amino-acid chain; its full sequence is Receptor expression-enhancing protein 4 (257 aa).

Helical transmembrane passes span 1-21 (MVSW…CPAY) and 42-62 (WIVF…ISWF). A phosphoserine mark is found at Ser152 and Ser194. The interval 183–257 (PIGYRAGGLQ…KKTVPSDVDS (75 aa)) is disordered. Thr196 is modified (phosphothreonine). Position 202 is a phosphoserine (Ser202). Thr250 carries the post-translational modification Phosphothreonine. Ser253 carries the phosphoserine modification.

The protein belongs to the DP1 family. Expressed in circumvallate papillae and testis.

The protein localises to the endoplasmic reticulum membrane. Functionally, microtubule-binding protein required to ensure proper cell division and nuclear envelope reassembly by sequestering the endoplasmic reticulum away from chromosomes during mitosis. Probably acts by clearing the endoplasmic reticulum membrane from metaphase chromosomes. This chain is Receptor expression-enhancing protein 4 (REEP4), found in Homo sapiens (Human).